Consider the following 374-residue polypeptide: MSKFKSLLLLFGTLILLSGCSNIEVFNAKGPVASSQKFLIIYSIIFMLVIVAVVLSMFAIFIFKYSYKKNSESGKMHHNSLIETIWFVVPILIVIALAIPTVKTLYDYEKPPEKDKDPLVVYAVSAGYKWFFAYPDQHIETVNTLTIPKDRPVVFKLQSMDTMTSFWIPQLGGQKYAMTGMTMNWTLTADQLGTFRGRNSNFNGEGFSRQTFKVHSVSQNDFDKWVKEAKGKKTLSQDTFDKQLLPSTSNKELTFSGTHMAFVDPAADPEYIFYAYKRYNFEQKDPNFTAEEDLYKDVKDKPIKPARKVHITNPNYERHGMKPMILGNNEKYDNEFKKEEDHNSKEMEKISKGAKDENASKLHKKEHDDHGGGH.

The signal sequence occupies residues 1–19 (MSKFKSLLLLFGTLILLSG). A lipid anchor (N-palmitoyl cysteine) is attached at Cys20. Cys20 carries S-diacylglycerol cysteine lipidation. 2 helical membrane passes run 43–63 (SIIF…IFIF) and 82–102 (IETI…IPTV). The disordered stretch occupies residues 317-374 (ERHGMKPMILGNNEKYDNEFKKEEDHNSKEMEKISKGAKDENASKLHKKEHDDHGGGH). The segment covering 330-374 (EKYDNEFKKEEDHNSKEMEKISKGAKDENASKLHKKEHDDHGGGH) has biased composition (basic and acidic residues).

The protein belongs to the cytochrome c oxidase subunit 2 family.

The protein localises to the cell membrane. It catalyses the reaction 2 a quinol + O2 = 2 a quinone + 2 H2O. In terms of biological role, catalyzes quinol oxidation with the concomitant reduction of oxygen to water. Subunit II transfers the electrons from a quinol to the binuclear center of the catalytic subunit I. This chain is Probable quinol oxidase subunit 2 (qoxA), found in Staphylococcus epidermidis (strain ATCC 12228 / FDA PCI 1200).